A 224-amino-acid polypeptide reads, in one-letter code: Peroxynitrite isomerase 2 (224 aa).

The GXWXGXG motif lies at 71–77 (GVWRGEG). The heme b site is built by Lys187 and His214.

The protein belongs to the nitrobindin family. As to quaternary structure, homodimer. Heme b is required as a cofactor.

It carries out the reaction peroxynitrite = nitrate. The protein operates within nitrogen metabolism. Functionally, heme-binding protein able to scavenge peroxynitrite and to protect free L-tyrosine against peroxynitrite-mediated nitration, by acting as a peroxynitrite isomerase that converts peroxynitrite to nitrate. Therefore, this protein likely plays a role in peroxynitrite sensing and in the detoxification of reactive nitrogen and oxygen species (RNS and ROS, respectively). Is able to bind nitric oxide (NO) in vitro, but may act as a sensor of peroxynitrite levels in vivo. The protein is Peroxynitrite isomerase 2 of Mycobacterium sp. (strain JLS).